Consider the following 475-residue polypeptide: Sulfate adenylyltransferase subunit 1 (475 aa).

The tr-type G domain occupies Lys-25–Arg-239. The tract at residues Gly-34–Ser-41 is G1. A GTP-binding site is contributed by Gly-34–Ser-41. Positions Gly-92–Asp-96 are G2. The tract at residues Asp-113–Gly-116 is G3. Residues Asp-113–His-117 and Asn-168–Asp-171 each bind GTP. Residues Asn-168 to Asp-171 form a G4 region. The G5 stretch occupies residues Ser-206–Leu-208.

The protein belongs to the TRAFAC class translation factor GTPase superfamily. Classic translation factor GTPase family. CysN/NodQ subfamily. Heterodimer composed of CysD, the smaller subunit, and CysN.

It catalyses the reaction sulfate + ATP + H(+) = adenosine 5'-phosphosulfate + diphosphate. Its pathway is sulfur metabolism; hydrogen sulfide biosynthesis; sulfite from sulfate: step 1/3. With CysD forms the ATP sulfurylase (ATPS) that catalyzes the adenylation of sulfate producing adenosine 5'-phosphosulfate (APS) and diphosphate, the first enzymatic step in sulfur assimilation pathway. APS synthesis involves the formation of a high-energy phosphoric-sulfuric acid anhydride bond driven by GTP hydrolysis by CysN coupled to ATP hydrolysis by CysD. In Shigella boydii serotype 18 (strain CDC 3083-94 / BS512), this protein is Sulfate adenylyltransferase subunit 1.